We begin with the raw amino-acid sequence, 213 residues long: Probable GTP-binding protein EngB (213 aa).

The region spanning 25–203 (EGTEVAFAGR…EDVLNGWLLP (179 aa)) is the EngB-type G domain. GTP is bound by residues 33 to 40 (GRSNAGKS), 60 to 64 (GRTQL), 80 to 83 (DLPG), 147 to 150 (TKAD), and 179 to 184 (AQMFSA). 2 residues coordinate Mg(2+): S40 and T62.

The protein belongs to the TRAFAC class TrmE-Era-EngA-EngB-Septin-like GTPase superfamily. EngB GTPase family. Mg(2+) serves as cofactor.

Necessary for normal cell division and for the maintenance of normal septation. This is Probable GTP-binding protein EngB from Saccharophagus degradans (strain 2-40 / ATCC 43961 / DSM 17024).